We begin with the raw amino-acid sequence, 160 residues long: SsrA-binding protein (160 aa).

It belongs to the SmpB family.

It localises to the cytoplasm. Required for rescue of stalled ribosomes mediated by trans-translation. Binds to transfer-messenger RNA (tmRNA), required for stable association of tmRNA with ribosomes. tmRNA and SmpB together mimic tRNA shape, replacing the anticodon stem-loop with SmpB. tmRNA is encoded by the ssrA gene; the 2 termini fold to resemble tRNA(Ala) and it encodes a 'tag peptide', a short internal open reading frame. During trans-translation Ala-aminoacylated tmRNA acts like a tRNA, entering the A-site of stalled ribosomes, displacing the stalled mRNA. The ribosome then switches to translate the ORF on the tmRNA; the nascent peptide is terminated with the 'tag peptide' encoded by the tmRNA and targeted for degradation. The ribosome is freed to recommence translation, which seems to be the essential function of trans-translation. The sequence is that of SsrA-binding protein from Sodalis glossinidius (strain morsitans).